Consider the following 353-residue polypeptide: Protein RecA (353 aa).

Position 75–82 (75–82 (GPESSGKT)) interacts with ATP.

This sequence belongs to the RecA family.

Its subcellular location is the cytoplasm. Can catalyze the hydrolysis of ATP in the presence of single-stranded DNA, the ATP-dependent uptake of single-stranded DNA by duplex DNA, and the ATP-dependent hybridization of homologous single-stranded DNAs. It interacts with LexA causing its activation and leading to its autocatalytic cleavage. The chain is Protein RecA from Cupriavidus pinatubonensis (strain JMP 134 / LMG 1197) (Cupriavidus necator (strain JMP 134)).